Reading from the N-terminus, the 308-residue chain is Ribosomal RNA large subunit methyltransferase F (308 aa).

Belongs to the methyltransferase superfamily. METTL16/RlmF family.

The protein localises to the cytoplasm. It catalyses the reaction adenosine(1618) in 23S rRNA + S-adenosyl-L-methionine = N(6)-methyladenosine(1618) in 23S rRNA + S-adenosyl-L-homocysteine + H(+). Its function is as follows. Specifically methylates the adenine in position 1618 of 23S rRNA. This chain is Ribosomal RNA large subunit methyltransferase F, found in Escherichia coli O6:H1 (strain CFT073 / ATCC 700928 / UPEC).